Consider the following 328-residue polypeptide: Coiled-coil domain-containing protein 54 (328 aa).

Residues 93 to 148 (KIQEKTDFFQKQMQVLETKMNVNENKQCATAEDIFSVKEDVDALKKKVTELGNQNS) adopt a coiled-coil conformation. Thr182 carries the post-translational modification Phosphothreonine.

The sequence is that of Coiled-coil domain-containing protein 54 (CCDC54) from Bos taurus (Bovine).